The sequence spans 228 residues: ATP synthase subunit a 2 (228 aa).

The next 6 membrane-spanning stretches (helical) occupy residues 16 to 36 (VGTTVVTTWGIMVVLSLGAWL), 74 to 94 (VFPFVATLWLFIGIANLSSLI), 103 to 123 (DLSATTALALLVFFSVHWFGI), 139 to 159 (SPFLLPFHVIGEITRTLALAV), 173 to 193 (LLVLLVAGLFAPIPLLMLHIV), and 194 to 214 (EALVQAYIFGMLTLVYIAGAI).

It belongs to the ATPase A chain family. As to quaternary structure, F-type ATPases have 2 components, CF(1) - the catalytic core - and CF(0) - the membrane proton channel. CF(1) has five subunits: alpha(3), beta(3), gamma(1), delta(1), epsilon(1). CF(0) has three main subunits: a(1), b(2) and c(9-12). The alpha and beta chains form an alternating ring which encloses part of the gamma chain. CF(1) is attached to CF(0) by a central stalk formed by the gamma and epsilon chains, while a peripheral stalk is formed by the delta and b chains.

It localises to the cell inner membrane. Key component of the proton channel; it plays a direct role in the translocation of protons across the membrane. The sequence is that of ATP synthase subunit a 2 from Pelobacter propionicus (strain DSM 2379 / NBRC 103807 / OttBd1).